A 708-amino-acid chain; its full sequence is Homeobox-leucine zipper protein HDG10 (708 aa).

The segment at 1 to 24 (MDSSHNDSSSDEEGIDSNNRRHHS) is disordered. The homeobox DNA-binding region spans 16–75 (DSNNRRHHSNHQVQRLEAFFHECPHPDDSQRRQLGNELNLKHKQIKFWFQNRRTQARIHN). Positions 119 to 141 (LCNLQKLRTKNVILKTEYERLSS) form a coiled coil. Residues 162-188 (GPSTYGSTSNNRPASYGSSSNHLPQQS) are disordered. Residues 165-188 (TYGSTSNNRPASYGSSSNHLPQQS) are compositionally biased toward polar residues. The region spanning 218-456 (SQLEKNRMFE…LQRMCERLSL (239 aa)) is the START domain.

It belongs to the HD-ZIP homeobox family. Class IV subfamily. Interacts with ANT, BBM and AIL1. As to expression, expressed in exclusively in anthers with highest levels in the tapetum and pollen grains.

It localises to the nucleus. Functionally, probable transcription factor. In Arabidopsis thaliana (Mouse-ear cress), this protein is Homeobox-leucine zipper protein HDG10.